Reading from the N-terminus, the 206-residue chain is Large ribosomal subunit protein uL4 (206 aa).

The segment covering 65-76 (KQKGTGRARHSS) has biased composition (basic residues). A disordered region spans residues 65-94 (KQKGTGRARHSSARAPQFRGGGKAHGPVVR).

Belongs to the universal ribosomal protein uL4 family. Part of the 50S ribosomal subunit.

Its function is as follows. One of the primary rRNA binding proteins, this protein initially binds near the 5'-end of the 23S rRNA. It is important during the early stages of 50S assembly. It makes multiple contacts with different domains of the 23S rRNA in the assembled 50S subunit and ribosome. In terms of biological role, forms part of the polypeptide exit tunnel. The chain is Large ribosomal subunit protein uL4 from Bartonella quintana (strain Toulouse) (Rochalimaea quintana).